A 123-amino-acid chain; its full sequence is DNA-directed RNA polymerase subunit omega (123 aa).

The disordered stretch occupies residues 67 to 123; that stretch reads EESAADSLSLGGFSTADVEAEVGGGPVQPDPGASQERAFDEAADGTAQGSGDPDPTT.

The protein belongs to the RNA polymerase subunit omega family. The RNAP catalytic core consists of 2 alpha, 1 beta, 1 beta' and 1 omega subunit. When a sigma factor is associated with the core the holoenzyme is formed, which can initiate transcription.

The enzyme catalyses RNA(n) + a ribonucleoside 5'-triphosphate = RNA(n+1) + diphosphate. In terms of biological role, promotes RNA polymerase assembly. Latches the N- and C-terminal regions of the beta' subunit thereby facilitating its interaction with the beta and alpha subunits. The polypeptide is DNA-directed RNA polymerase subunit omega (Halorhodospira halophila (strain DSM 244 / SL1) (Ectothiorhodospira halophila (strain DSM 244 / SL1))).